Here is a 131-residue protein sequence, read N- to C-terminus: UPF0102 protein RALTA_A3032 (131 aa).

The span at 1 to 12 shows a compositional bias: polar residues; sequence MMRSFKSTQEPS. The disordered stretch occupies residues 1-21; it reads MMRSFKSTQEPSRQARGAQAE.

This sequence belongs to the UPF0102 family.

The polypeptide is UPF0102 protein RALTA_A3032 (Cupriavidus taiwanensis (strain DSM 17343 / BCRC 17206 / CCUG 44338 / CIP 107171 / LMG 19424 / R1) (Ralstonia taiwanensis (strain LMG 19424))).